Consider the following 330-residue polypeptide: Small ribosomal subunit protein mS35 (330 aa).

Residues 50–73 (AAGKGVRGQMKPRRQAGEPRTERM) form a disordered region. A compositionally biased stretch (basic and acidic residues) spans 64-73 (QAGEPRTERM).

The protein belongs to the mitochondrion-specific ribosomal protein mS35 family. As to quaternary structure, component of the mitochondrial ribosome small subunit (28S) which comprises a 12S rRNA and about 30 distinct proteins.

Its subcellular location is the mitochondrion. The polypeptide is Small ribosomal subunit protein mS35 (mrps35) (Danio rerio (Zebrafish)).